A 257-amino-acid polypeptide reads, in one-letter code: Global transcriptional regulator CodY (257 aa).

Residues 1–155 (MSLLSKTREL…AATVIGMEIL (155 aa)) form a GAF domain region. GTP is bound by residues Val22, Phe24, Ser43, Arg44, Arg45, and Lys47. L-isoleucine is bound by residues Arg61, Thr96, and Phe98. GTP contacts are provided by Glu153 and Lys158. A DNA-binding region (H-T-H motif) is located at residues 203-222 (ASKVADRVGITRSVIVNALR).

It belongs to the CodY family. As to quaternary structure, homodimer. Homotetramer. May form homodimers under conditions in which energy sources are sufficient (active state) and homotetramers under insufficient nutrient conditions (inactive state).

The protein localises to the cytoplasm. Activity of CodY is modulated by interaction with two types of effectors: the branched-chain amino acids (BCAAs) leucine, isoleucine and valine, which are signals of the nutritional status of the cell, and GTP, which may signal the energetic status of the cell. DNA-binding global transcriptional regulator which is involved in the adaptive response to starvation and acts by directly or indirectly controlling the expression of numerous genes in response to nutrient availability. During rapid exponential growth, CodY is highly active and represses genes whose products allow adaptation to nutrient depletion. This chain is Global transcriptional regulator CodY, found in Staphylococcus aureus (strain Mu3 / ATCC 700698).